The primary structure comprises 66 residues: Clusterin (66 aa).

The protein belongs to the clusterin family. As to quaternary structure, antiparallel disulfide-linked heterodimer of an alpha chain and a beta chain. Self-associates and forms higher oligomers. Interacts with a broad range of misfolded proteins, including APP, APOC2 and LYZ. Slightly acidic pH promotes interaction with misfolded proteins. Forms high-molecular weight oligomers upon interaction with misfolded proteins. Interacts with APOA1, LRP2, CLUAP1 and PON1. Interacts with the complement membrane attack complex. Interacts (via alpha chain) with XRCC6. Interacts with SYVN1, COMMD1, BTRC, CUL1 and with ubiquitin and SCF (SKP1-CUL1-F-box protein) E3 ubiquitin-protein ligase complexes. Interacts (via alpha chain) with BAX in stressed cells, where BAX undergoes a conformation change leading to association with the mitochondrial membrane. Does not interact with BAX in unstressed cells. Found in a complex with LTF, CLU, EPPIN and SEMG1. Interacts (immaturely glycosylated pre-secreted form) with HSPA5; this interaction promotes CLU stability and facilitates stress-induced CLU retrotranslocation from the secretory pathway to the mitochondria, thereby reducing stress-induced apoptosis by stabilizing mitochondrial membrane integrity. Interacts with BCL2L1; this interaction releases and activates BAX and promotes cell death. Interacts with TGFBR2 and ACVR1. Interacts (secreted form) with STMN3; this interaction may act as an important modulator during neuronal differentiation. Component of a epididymal complex at least composed of soluble form of prion protein PRNP, CLU, BPI, CES5A, MANBA and GLB1. Post-translationally, proteolytically cleaved on its way through the secretory system, probably within the Golgi lumen. Proteolytic cleavage is not necessary for its chaperone activity. All non-secreted forms are not proteolytically cleaved. Chaperone activity of uncleaved forms is dependent on a non-reducing environment. In terms of processing, polyubiquitinated, leading to proteasomal degradation. Under cellular stress, the intracellular level of cleaved form is reduced due to proteasomal degradation. Heavily N-glycosylated. About 30% of the protein mass is comprised of complex N-linked carbohydrate. Endoplasmic reticulum (ER) stress induces changes in glycosylation status and increases level of hypoglycosylated forms. Core carbohydrates are essential for chaperone activity. Non-secreted forms are hypoglycosylated or unglycosylated.

It is found in the secreted. Its subcellular location is the nucleus. The protein resides in the cytoplasm. It localises to the mitochondrion membrane. The protein localises to the cytosol. It is found in the microsome. Its subcellular location is the endoplasmic reticulum. The protein resides in the mitochondrion. It localises to the perinuclear region. The protein localises to the cytoplasmic vesicle. It is found in the secretory vesicle. Its subcellular location is the chromaffin granule. Functions as extracellular chaperone that prevents aggregation of non native proteins. Prevents stress-induced aggregation of blood plasma proteins. Inhibits formation of amyloid fibrils by APP, APOC2, B2M, CALCA, CSN3, SNCA and aggregation-prone LYZ variants (in vitro). Does not require ATP. Maintains partially unfolded proteins in a state appropriate for subsequent refolding by other chaperones, such as HSPA8/HSC70. Does not refold proteins by itself. Binding to cell surface receptors triggers internalization of the chaperone-client complex and subsequent lysosomal or proteasomal degradation. When secreted, protects cells against apoptosis and against cytolysis by complement: inhibits assembly of the complement membrane attack complex (MAC) by preventing polymerization of C9 pore component of the MAC complex. Intracellular forms interact with ubiquitin and SCF (SKP1-CUL1-F-box protein) E3 ubiquitin-protein ligase complexes and promote the ubiquitination and subsequent proteasomal degradation of target proteins. Promotes proteasomal degradation of COMMD1 and IKBKB. Modulates NF-kappa-B transcriptional activity. Following stress, promotes apoptosis. Inhibits apoptosis when associated with the mitochondrial membrane by interference with BAX-dependent release of cytochrome c into the cytoplasm. Plays a role in the regulation of cell proliferation. An intracellular form suppresses stress-induced apoptosis by stabilizing mitochondrial membrane integrity through interaction with HSPA5. Secreted form does not affect caspase or BAX-mediated intrinsic apoptosis and TNF-induced NF-kappa-B-activity. Secreted form act as an important modulator during neuronal differentiation through interaction with STMN3. Plays a role in the clearance of immune complexes that arise during cell injury. This Ovis aries (Sheep) protein is Clusterin (CLU).